The chain runs to 280 residues: Hydroxyethylthiazole kinase (280 aa).

M50 is a binding site for substrate. Positions 125 and 178 each coordinate ATP. A substrate-binding site is contributed by G205.

It belongs to the Thz kinase family. Mg(2+) is required as a cofactor.

The enzyme catalyses 5-(2-hydroxyethyl)-4-methylthiazole + ATP = 4-methyl-5-(2-phosphooxyethyl)-thiazole + ADP + H(+). It functions in the pathway cofactor biosynthesis; thiamine diphosphate biosynthesis; 4-methyl-5-(2-phosphoethyl)-thiazole from 5-(2-hydroxyethyl)-4-methylthiazole: step 1/1. Functionally, catalyzes the phosphorylation of the hydroxyl group of 4-methyl-5-beta-hydroxyethylthiazole (THZ). In Lacticaseibacillus casei (strain BL23) (Lactobacillus casei), this protein is Hydroxyethylthiazole kinase.